The chain runs to 196 residues: MSLLTRRLKPYYEELLEPLVNFFGKYNVSPNLITLFGLFLVGLGSFFLYLENLILAFLLLLLGALADSIDGALARRLNLKTEFGAFLDSTVDRFSDALPFTALGVHYASYGDETGVLLSFLALISSFGVSYTRARAESLGVYGLGGVFERTERWIVLLGSILLGLLKLGLFIITLGSLITVFQRVYETKKALEVKR.

This sequence belongs to the CDP-alcohol phosphatidyltransferase class-I family.

This is an uncharacterized protein from Aquifex aeolicus (strain VF5).